The following is a 286-amino-acid chain: Putative 2-aminoethylphosphonate transport system permease protein PhnU (286 aa).

Transmembrane regions (helical) follow at residues 19 to 39 (WLLL…SLIV), 76 to 96 (FFAT…LVFI), 111 to 131 (FIAL…GSAG), 150 to 170 (FLYS…PLVM), 202 to 222 (VIFP…LLLT), and 254 to 274 (YTVA…LFSL). The 208-residue stretch at 68–275 (LLNTLQIAFF…VLSLGLFSLY (208 aa)) folds into the ABC transmembrane type-1 domain.

Belongs to the binding-protein-dependent transport system permease family.

It is found in the cell inner membrane. Functionally, probably part of the PhnSTUV complex (TC 3.A.1.11.5) involved in 2-aminoethylphosphonate import. Probably responsible for the translocation of the substrate across the membrane. This is Putative 2-aminoethylphosphonate transport system permease protein PhnU (phnU) from Salmonella typhimurium (strain LT2 / SGSC1412 / ATCC 700720).